We begin with the raw amino-acid sequence, 315 residues long: piRNA biogenesis protein EXD1 (315 aa).

Positions 141-228 constitute a 3'-5' exonuclease domain; sequence IYIFDIQVMQ…ECLTNYLGLQ (88 aa).

It belongs to the EXD1 family. Homodimer. Component of the PET complex, at least composed of EXD1, SIWI, TDRD12 and piRNAs.

The protein resides in the cytoplasm. In terms of biological role, RNA-binding component of the PET complex, a multiprotein complex required for the processing of piRNAs during spermatogenesis. The piRNA metabolic process mediates the repression of transposable elements during meiosis by forming complexes composed of piRNAs and Piwi proteins and governs the methylation and subsequent repression of transposable elements, preventing their mobilization, which is essential for the germline integrity. The PET complex is required during the secondary piRNAs metabolic process for the PIWIL2 slicing-triggered loading of PIWIL4 piRNAs. In the PET complex, EXD1 probably acts as an RNA adapter. EXD1 is an inactive exonuclease. The polypeptide is piRNA biogenesis protein EXD1 (Bombyx mori (Silk moth)).